The chain runs to 702 residues: Lipase maturation factor 2 (702 aa).

Helical transmembrane passes span 10–30, 75–95, 164–184, 226–246, 259–279, 316–336, 363–383, and 398–418; these read LFLQ…YTQI, AQGL…ALLL, DLPF…SGVV, LSVV…FAPI, LLQV…LTLV, LLLE…YFGL, VTLP…LVVL, and AGIQ…ISLV. A glycan (N-linked (GlcNAc...) asparagine) is linked at asparagine 488. Residues 636 to 656 form a helical membrane-spanning segment; it reads ILLWGLFGAVVAIRVVQTLLA. The segment at 660-702 is disordered; sequence LQSSKQTREEKRKQTSKKDSRAASEQAAANSNSRDSWAPRRKK. Residues 665 to 681 are compositionally biased toward basic and acidic residues; it reads QTREEKRKQTSKKDSRA. Low complexity predominate over residues 682–693; it reads ASEQAAANSNSR.

This sequence belongs to the lipase maturation factor family.

It localises to the endoplasmic reticulum membrane. Involved in the maturation of specific proteins in the endoplasmic reticulum. May be required for maturation and transport of active lipoprotein lipase (LPL) through the secretory pathway. This chain is Lipase maturation factor 2 (Lmf2), found in Mus musculus (Mouse).